Here is a 104-residue protein sequence, read N- to C-terminus: MEMMRNPKNTKQEIKLAFFYIIDGAIIALMLVLASYMPKVVPVGGFGRIMFYVLFGTFGLFLCIKPHNSPTNRNIFVILDMLKMDNKNYHPIEVNTISSETKRK.

2 helical membrane-spanning segments follow: residues 16 to 36 (LAFFYIIDGAIIALMLVLASY) and 44 to 64 (GGFGRIMFYVLFGTFGLFLCI).

Its subcellular location is the cell membrane. This is an uncharacterized protein from Bacillus anthracis.